Consider the following 201-residue polypeptide: ATP-dependent Clp protease proteolytic subunit (201 aa).

Ser98 (nucleophile) is an active-site residue. His123 is a catalytic residue.

Belongs to the peptidase S14 family. In terms of assembly, fourteen ClpP subunits assemble into 2 heptameric rings which stack back to back to give a disk-like structure with a central cavity, resembling the structure of eukaryotic proteasomes.

The protein resides in the cytoplasm. The enzyme catalyses Hydrolysis of proteins to small peptides in the presence of ATP and magnesium. alpha-casein is the usual test substrate. In the absence of ATP, only oligopeptides shorter than five residues are hydrolyzed (such as succinyl-Leu-Tyr-|-NHMec, and Leu-Tyr-Leu-|-Tyr-Trp, in which cleavage of the -Tyr-|-Leu- and -Tyr-|-Trp bonds also occurs).. Cleaves peptides in various proteins in a process that requires ATP hydrolysis. Has a chymotrypsin-like activity. Plays a major role in the degradation of misfolded proteins. The chain is ATP-dependent Clp protease proteolytic subunit from Desulfatibacillum aliphaticivorans.